The primary structure comprises 302 residues: Deoxyribonuclease-1-like 1 (302 aa).

Positions 1-18 (MHYPTALLFLILANGAQA) are cleaved as a signal peptide. Active-site residues include Glu97 and His148. Cys187 and Cys224 are oxidised to a cystine. An N-linked (GlcNAc...) asparagine glycan is attached at Asn261.

It belongs to the DNase I family. As to expression, highest levels in skeletal and cardiac muscles. Detectable in all other tissues tested except brain.

It is found in the endoplasmic reticulum. This is Deoxyribonuclease-1-like 1 (DNASE1L1) from Homo sapiens (Human).